The primary structure comprises 379 residues: Alcohol dehydrogenase class-2 isozyme 1 (379 aa).

Zn(2+) is bound by residues cysteine 47, histidine 69, cysteine 99, cysteine 102, cysteine 105, cysteine 113, and cysteine 176. NAD(+)-binding positions include 205–210, aspartate 229, lysine 234, 298–300, and arginine 374; these read GLGGVG and VGV.

It belongs to the zinc-containing alcohol dehydrogenase family. Class-II subfamily. As to quaternary structure, homodimer. Zn(2+) is required as a cofactor.

It localises to the cytoplasm. It carries out the reaction a primary alcohol + NAD(+) = an aldehyde + NADH + H(+). The enzyme catalyses a secondary alcohol + NAD(+) = a ketone + NADH + H(+). The protein is Alcohol dehydrogenase class-2 isozyme 1 (ADH2-1) of Oryctolagus cuniculus (Rabbit).